The following is a 518-amino-acid chain: Integrator complex subunit 14 (518 aa).

Positions 2 to 204 constitute a VWFA domain; it reads PTVVVMDVSL…KNVQSMFGKL (203 aa). Mg(2+) is bound by residues S10, S12, and T86. K418 is subject to N6-acetyllysine.

This sequence belongs to the Integrator subunit 14 family. As to quaternary structure, component of the Integrator complex, composed of core subunits INTS1, INTS2, INTS3, INTS4, INTS5, INTS6, INTS7, INTS8, INTS9/RC74, INTS10, INTS11/CPSF3L, INTS12, INTS13, INTS14 and INTS15. The core complex associates with protein phosphatase 2A subunits PPP2CA and PPP2R1A, to form the Integrator-PP2A (INTAC) complex. INTS14 is part of the tail subcomplex, composed of INTS10, INTS13, INTS14 and INTS15.

It is found in the nucleus. In terms of biological role, component of the integrator complex, a multiprotein complex that terminates RNA polymerase II (Pol II) transcription in the promoter-proximal region of genes. The integrator complex provides a quality checkpoint during transcription elongation by driving premature transcription termination of transcripts that are unfavorably configured for transcriptional elongation: the complex terminates transcription by (1) catalyzing dephosphorylation of the C-terminal domain (CTD) of Pol II subunit POLR2A/RPB1 and SUPT5H/SPT5, (2) degrading the exiting nascent RNA transcript via endonuclease activity and (3) promoting the release of Pol II from bound DNA. The integrator complex is also involved in terminating the synthesis of non-coding Pol II transcripts, such as enhancer RNAs (eRNAs), small nuclear RNAs (snRNAs), telomerase RNAs and long non-coding RNAs (lncRNAs). Within the integrator complex, INTS14 is part of the integrator tail module that acts as a platform for the recruitment of transcription factors at promoters. In Bos taurus (Bovine), this protein is Integrator complex subunit 14.